The chain runs to 419 residues: Acyl-coenzyme A thioesterase 1 (419 aa).

Residues Ser232, Asp324, and His358 each act as charge relay system in the active site. Residue Ser416 is modified to Phosphoserine.

The protein belongs to the C/M/P thioester hydrolase family. Monomer. As to expression, expressed in liver.

It is found in the cytoplasm. It localises to the cytosol. It carries out the reaction hexadecanoyl-CoA + H2O = hexadecanoate + CoA + H(+). It catalyses the reaction dodecanoyl-CoA + H2O = dodecanoate + CoA + H(+). The catalysed reaction is tetradecanoyl-CoA + H2O = tetradecanoate + CoA + H(+). The enzyme catalyses decanoyl-CoA + H2O = decanoate + CoA + H(+). It carries out the reaction octadecanoyl-CoA + H2O = octadecanoate + CoA + H(+). It catalyses the reaction eicosanoyl-CoA + H2O = eicosanoate + CoA + H(+). The catalysed reaction is (9Z)-octadecenoyl-CoA + H2O = (9Z)-octadecenoate + CoA + H(+). The enzyme catalyses (9Z)-hexadecenoyl-CoA + H2O = (9Z)-hexadecenoate + CoA + H(+). It carries out the reaction (9E)-octadecenoyl-CoA + H2O = (9E)-octadecenoate + CoA + H(+). Its pathway is lipid metabolism; fatty acid metabolism. Catalyzes the hydrolysis of acyl-CoAs into free fatty acids and coenzyme A (CoASH), regulating their respective intracellular levels. More active towards saturated and unsaturated long chain fatty acyl-CoAs (C12-C20). The polypeptide is Acyl-coenzyme A thioesterase 1 (Acot1) (Rattus norvegicus (Rat)).